A 416-amino-acid polypeptide reads, in one-letter code: Gamma-glutamyl phosphate reductase (416 aa).

It belongs to the gamma-glutamyl phosphate reductase family.

Its subcellular location is the cytoplasm. The enzyme catalyses L-glutamate 5-semialdehyde + phosphate + NADP(+) = L-glutamyl 5-phosphate + NADPH + H(+). Its pathway is amino-acid biosynthesis; L-proline biosynthesis; L-glutamate 5-semialdehyde from L-glutamate: step 2/2. Catalyzes the NADPH-dependent reduction of L-glutamate 5-phosphate into L-glutamate 5-semialdehyde and phosphate. The product spontaneously undergoes cyclization to form 1-pyrroline-5-carboxylate. The sequence is that of Gamma-glutamyl phosphate reductase from Salmonella heidelberg (strain SL476).